The chain runs to 1072 residues: LRR receptor-like serine/threonine-protein kinase RGI5 (1072 aa).

Residues 1–21 (MERERSNFFFLFLFCSWVSMA) form the signal peptide. Topologically, residues 22–706 (QPTLSLSSDG…NGVKSPKIVA (685 aa)) are extracellular. The cysteines at positions 56 and 63 are disulfide-linked. LRR repeat units follow at residues 66–89 (DNRV…DLSS), 90–113 (LSSL…SFGK), 114–138 (LTHL…LGRL), 140–162 (TLQF…ISNL), 164–185 (ALQV…SFGS), 187–211 (VSLQ…LGFL), 212–234 (KNLT…TFGN), 235–259 (LVNL…LGLC), 260–283 (SELR…LGKL), 285–307 (KITS…ISNC), 308–331 (SSLV…LGKL), 332–355 (VWLE…LSNC), 356–379 (SSLI…IGNL), 381–402 (SLQS…SFGN), 403–427 (CTDL…LFSL), 429–451 (RLSK…VAKC), 452–475 (QSLV…IGEL), 477–499 (NLVF…ISNI), 500–523 (TVLE…LGNL), 524–546 (VNLE…SFGN), 548–571 (SYLN…IKNL), 572–595 (QKLT…LGQV), 597–619 (SLTI…TFSD), 620–642 (LTQL…VLGS), and 643–667 (LTSL…PFFK). N-linked (GlcNAc...) asparagine glycans are attached at residues N80, N97, and N102. The Small peptide recognition signature appears at 171 to 172 (QD). Residue N176 is glycosylated (N-linked (GlcNAc...) asparagine). Residues 193–196 (RLGG) carry the Small peptide recognition motif. N213 is a glycosylation site (N-linked (GlcNAc...) asparagine). 3 short sequence motifs (small peptide recognition) span residues 216–221 (TLGFAA), Y244, and 266–268 (YLH). An N-linked (GlcNAc...) asparagine glycan is attached at N306. 2 consecutive short sequence motifs (small peptide recognition) follow at residues 314–317 (DVSA) and 336–338 (QLQ). A glycan (N-linked (GlcNAc...) asparagine) is linked at N354. Positions 384 to 388 (SFFLW) match the Small peptide recognition motif. Residue N402 is glycosylated (N-linked (GlcNAc...) asparagine). 3 consecutive short sequence motifs (small peptide recognition) follow at residues 410-413 (DLSR), 432-436 (KLLLL), and 456-458 (RLR). N498 carries an N-linked (GlcNAc...) asparagine glycan. N546 carries N-linked (GlcNAc...) asparagine glycosylation. N650 and N655 each carry an N-linked (GlcNAc...) asparagine glycan. Residues 707-727 (LTAVILASITIAILAAWLLIL) form a helical membrane-spanning segment. Residues 728 to 1072 (RNNHLYKTSQ…SQPLIKPSSS (345 aa)) are Cytoplasmic-facing. T764 is modified (phosphothreonine). A Protein kinase domain is found at 772-1067 (LTDENVIGKG…EWGKTSQPLI (296 aa)). Residues 778-786 (IGKGCSGIV) and K800 contribute to the ATP site. A phosphotyrosine mark is found at Y851 and Y887. D900 functions as the Proton acceptor in the catalytic mechanism. S936 carries the post-translational modification Phosphoserine. 2 positions are modified to phosphotyrosine: Y944 and Y951. A Phosphothreonine modification is found at T952.

This sequence belongs to the protein kinase superfamily. Ser/Thr protein kinase family. In terms of assembly, binds to RGF1; this interaction triggers the formation of heterodimers with SERK1. In terms of processing, phosphorylated and ubiquitinated upon interaction with RGF1, thus leading to activation a subsequent degradation. Post-translationally, autophosphorylated. In terms of tissue distribution, expressed in roots and hypocotyls.

Its subcellular location is the membrane. The enzyme catalyses L-seryl-[protein] + ATP = O-phospho-L-seryl-[protein] + ADP + H(+). The catalysed reaction is L-threonyl-[protein] + ATP = O-phospho-L-threonyl-[protein] + ADP + H(+). In terms of biological role, together with RGI1, RGI2, RGI3 and RGI4, acts as a receptor of RGF1, a peptide hormone that maintains the postembryonic root stem cell niche by regulating the expression levels and patterns of the transcription factor PLETHORA (PLT). Links RGF1 signal with its downstream components. This chain is LRR receptor-like serine/threonine-protein kinase RGI5, found in Arabidopsis thaliana (Mouse-ear cress).